We begin with the raw amino-acid sequence, 408 residues long: Probable 2,3-bisphosphoglycerate-independent phosphoglycerate mutase (408 aa).

This sequence belongs to the BPG-independent phosphoglycerate mutase family. A-PGAM subfamily.

It carries out the reaction (2R)-2-phosphoglycerate = (2R)-3-phosphoglycerate. The protein operates within carbohydrate degradation; glycolysis; pyruvate from D-glyceraldehyde 3-phosphate: step 3/5. Its function is as follows. Catalyzes the interconversion of 2-phosphoglycerate and 3-phosphoglycerate. The protein is Probable 2,3-bisphosphoglycerate-independent phosphoglycerate mutase of Deinococcus geothermalis (strain DSM 11300 / CIP 105573 / AG-3a).